The primary structure comprises 158 residues: Endoribonuclease YbeY (158 aa).

Zn(2+) is bound by residues His118, His122, and His128.

The protein belongs to the endoribonuclease YbeY family. Zn(2+) serves as cofactor.

It localises to the cytoplasm. Functionally, single strand-specific metallo-endoribonuclease involved in late-stage 70S ribosome quality control and in maturation of the 3' terminus of the 16S rRNA. This Bartonella bacilliformis (strain ATCC 35685 / KC583 / Herrer 020/F12,63) protein is Endoribonuclease YbeY.